The chain runs to 112 residues: UPF0102 protein NIS_1551 (112 aa).

The protein belongs to the UPF0102 family.

This Nitratiruptor sp. (strain SB155-2) protein is UPF0102 protein NIS_1551.